Consider the following 432-residue polypeptide: Glutamyl-tRNA reductase (432 aa).

Residues 55–58 (TCNR), Ser-114, 119–121 (ETQ), and Gln-125 contribute to the substrate site. Cys-56 acts as the Nucleophile in catalysis. 194–199 (GAGEMI) is a binding site for NADP(+).

It belongs to the glutamyl-tRNA reductase family. In terms of assembly, homodimer.

The enzyme catalyses (S)-4-amino-5-oxopentanoate + tRNA(Glu) + NADP(+) = L-glutamyl-tRNA(Glu) + NADPH + H(+). It functions in the pathway porphyrin-containing compound metabolism; protoporphyrin-IX biosynthesis; 5-aminolevulinate from L-glutamyl-tRNA(Glu): step 1/2. Its function is as follows. Catalyzes the NADPH-dependent reduction of glutamyl-tRNA(Glu) to glutamate 1-semialdehyde (GSA). The protein is Glutamyl-tRNA reductase of Burkholderia orbicola (strain MC0-3).